We begin with the raw amino-acid sequence, 283 residues long: Pantothenate synthetase (283 aa).

34–41 serves as a coordination point for ATP; sequence MGALHDGH. Catalysis depends on His-41, which acts as the Proton donor. A (R)-pantoate-binding site is contributed by Gln-65. Gln-65 is a binding site for beta-alanine. Residue 152–155 participates in ATP binding; sequence GEKD. Gln-158 contacts (R)-pantoate. ATP-binding positions include Val-181 and 189 to 192; that span reads MSSR.

It belongs to the pantothenate synthetase family. As to quaternary structure, homodimer.

It is found in the cytoplasm. The enzyme catalyses (R)-pantoate + beta-alanine + ATP = (R)-pantothenate + AMP + diphosphate + H(+). It functions in the pathway cofactor biosynthesis; (R)-pantothenate biosynthesis; (R)-pantothenate from (R)-pantoate and beta-alanine: step 1/1. Functionally, catalyzes the condensation of pantoate with beta-alanine in an ATP-dependent reaction via a pantoyl-adenylate intermediate. The sequence is that of Pantothenate synthetase from Bradyrhizobium sp. (strain BTAi1 / ATCC BAA-1182).